A 263-amino-acid chain; its full sequence is 3-methyl-2-oxobutanoate hydroxymethyltransferase (263 aa).

Residues aspartate 45 and aspartate 84 each coordinate Mg(2+). 3-methyl-2-oxobutanoate contacts are provided by residues 45–46 (DS), aspartate 84, and lysine 112. Glutamate 114 is a Mg(2+) binding site. Glutamate 180 functions as the Proton acceptor in the catalytic mechanism.

This sequence belongs to the PanB family. In terms of assembly, homodecamer; pentamer of dimers. Mg(2+) is required as a cofactor.

It localises to the cytoplasm. It carries out the reaction 3-methyl-2-oxobutanoate + (6R)-5,10-methylene-5,6,7,8-tetrahydrofolate + H2O = 2-dehydropantoate + (6S)-5,6,7,8-tetrahydrofolate. It participates in cofactor biosynthesis; (R)-pantothenate biosynthesis; (R)-pantoate from 3-methyl-2-oxobutanoate: step 1/2. Catalyzes the reversible reaction in which hydroxymethyl group from 5,10-methylenetetrahydrofolate is transferred onto alpha-ketoisovalerate to form ketopantoate. The polypeptide is 3-methyl-2-oxobutanoate hydroxymethyltransferase (Salmonella paratyphi C (strain RKS4594)).